We begin with the raw amino-acid sequence, 207 residues long: Glutathione S-transferase 3 (207 aa).

Residues 2-79 enclose the GST N-terminal domain; that stretch reads VHYKLTYFNA…YLARKFGFVG (78 aa). Residues Y8, K43, 49 to 51, and 63 to 64 contribute to the glutathione site; these read GQV and QS. Residues 81–207 enclose the GST C-terminal domain; it reads TAEEELQADE…WLAKRPETRF (127 aa).

It belongs to the GST superfamily. Sigma family.

The enzyme catalyses RX + glutathione = an S-substituted glutathione + a halide anion + H(+). Its function is as follows. Conjugation of reduced glutathione to a wide number of exogenous and endogenous hydrophobic electrophiles. In Caenorhabditis elegans, this protein is Glutathione S-transferase 3 (gst-3).